The chain runs to 338 residues: Mas-related G-protein coupled receptor member B2 (338 aa).

Over 1 to 40 the chain is Extracellular; sequence MSGDFLIKNLSTSAWKTNITVLNGSYYIDTSVCVTRNQAM. 3 N-linked (GlcNAc...) asparagine glycosylation sites follow: N9, N18, and N23. Residues 41–61 form a helical membrane-spanning segment; sequence ILLSIIISLVGMGLNAIVLWF. Topologically, residues 62–89 are cytoplasmic; the sequence is LGIRMHTNAFTVYILNLAMADFLYLCSQ. The chain crosses the membrane as a helical span at residues 90-110; sequence FVICLLIAFYIFYSIDINIPL. A topological domain (extracellular) is located at residue V111. Residues 112-132 form a helical membrane-spanning segment; the sequence is LYVVPIFAYLSGLSILSTISI. Residues 133 to 157 lie on the Cytoplasmic side of the membrane; sequence ERCLSVIWPIWYRCKRPRHTSAITC. The chain crosses the membrane as a helical span at residues 158–178; the sequence is FVLWVMSLLLGLLEGKACGLL. The Extracellular segment spans residues 179 to 191; sequence FNSFDSYWCETFD. The chain crosses the membrane as a helical span at residues 192–212; sequence VITNIWSVVFFGVLCGSSLTL. The Cytoplasmic segment spans residues 213 to 231; it reads LVRIFCGSQRIPMTRLYVT. A helical membrane pass occupies residues 232–252; the sequence is ITLTVLVFLIFGLPFGIYWIL. Over 253–268 the chain is Extracellular; it reads YQWISNFYYVEICNFY. Residues 269–289 traverse the membrane as a helical segment; that stretch reads LEILFLSCVNSCMNPIIYFLV. Residues 290–338 lie on the Cytoplasmic side of the membrane; that stretch reads GSIRHRRFRRKTLKLLLQRAMQDTPEEEQSGNKSSSEHPEELETVQSCS. A disordered region spans residues 310–338; that stretch reads MQDTPEEEQSGNKSSSEHPEELETVQSCS.

It belongs to the G-protein coupled receptor 1 family. Mas subfamily. In terms of tissue distribution, mast cell-specific.

It localises to the cell membrane. In terms of biological role, mast cell-specific receptor for basic secretagogues, i.e. cationic amphiphilic drugs, as well as endo- or exogenous peptides, consisting of a basic head group and a hydrophobic core. Recognizes and binds small molecules containing a cyclized tetrahydroisoquinoline (THIQ), such as non-steroidal neuromuscular blocking drugs (NMBDs), including tubocurarine and atracurium. In response to these compounds, mediates pseudo-allergic reactions characterized by histamine release, inflammation and airway contraction. The protein is Mas-related G-protein coupled receptor member B2 (Mrgprb2) of Mus musculus (Mouse).